The sequence spans 195 residues: MAPVSPTDFPQQCHGAVVGLGGNIGPVLDNLQGAIAELALVAGIEVERCSSWYRSRAFGPPQPDYINGCVTLRVSLSPPELLQTLLAIEQKFGRIRLEKWGPRTLDLDLIFYGDRQLEQARLTIPHPQMQYRPFVLVPLAEIAPDWVDPRSGKTIIQLIEQVDCTAVWPVAPGLELGGSLEPEQVFAPGAVAVHG.

The protein belongs to the HPPK family.

The enzyme catalyses 6-hydroxymethyl-7,8-dihydropterin + ATP = (7,8-dihydropterin-6-yl)methyl diphosphate + AMP + H(+). It participates in cofactor biosynthesis; tetrahydrofolate biosynthesis; 2-amino-4-hydroxy-6-hydroxymethyl-7,8-dihydropteridine diphosphate from 7,8-dihydroneopterin triphosphate: step 4/4. In terms of biological role, catalyzes the transfer of pyrophosphate from adenosine triphosphate (ATP) to 6-hydroxymethyl-7,8-dihydropterin, an enzymatic step in folate biosynthesis pathway. The protein is 2-amino-4-hydroxy-6-hydroxymethyldihydropteridine pyrophosphokinase (folK) of Synechocystis sp. (strain ATCC 27184 / PCC 6803 / Kazusa).